Here is a 186-residue protein sequence, read N- to C-terminus: Probable nicotinate-nucleotide adenylyltransferase (186 aa).

The protein belongs to the NadD family.

The catalysed reaction is nicotinate beta-D-ribonucleotide + ATP + H(+) = deamido-NAD(+) + diphosphate. It functions in the pathway cofactor biosynthesis; NAD(+) biosynthesis; deamido-NAD(+) from nicotinate D-ribonucleotide: step 1/1. Its function is as follows. Catalyzes the reversible adenylation of nicotinate mononucleotide (NaMN) to nicotinic acid adenine dinucleotide (NaAD). The chain is Probable nicotinate-nucleotide adenylyltransferase from Tropheryma whipplei (strain Twist) (Whipple's bacillus).